We begin with the raw amino-acid sequence, 156 residues long: Small ribosomal subunit protein uS7 (156 aa).

Belongs to the universal ribosomal protein uS7 family. As to quaternary structure, part of the 30S ribosomal subunit. Contacts proteins S9 and S11.

Its function is as follows. One of the primary rRNA binding proteins, it binds directly to 16S rRNA where it nucleates assembly of the head domain of the 30S subunit. Is located at the subunit interface close to the decoding center, probably blocks exit of the E-site tRNA. In Vibrio campbellii (strain ATCC BAA-1116), this protein is Small ribosomal subunit protein uS7.